The following is a 97-amino-acid chain: Small integral membrane protein 8 (97 aa).

The tract at residues 1–24 (MSSAPEPPTFKKEPPKEKEFQSPG) is disordered. Residues 9-20 (TFKKEPPKEKEF) are compositionally biased toward basic and acidic residues. The helical transmembrane segment at 48-70 (PVMAFGLVTLSLCVAYIGYLHAI) threads the bilayer.

The protein belongs to the SMIM8 family.

It is found in the membrane. The polypeptide is Small integral membrane protein 8 (SMIM8) (Homo sapiens (Human)).